Here is a 274-residue protein sequence, read N- to C-terminus: 2,3,4,5-tetrahydropyridine-2,6-dicarboxylate N-succinyltransferase (274 aa).

The substrate site is built by Arg-104 and Asp-141.

The protein belongs to the transferase hexapeptide repeat family. As to quaternary structure, homotrimer.

Its subcellular location is the cytoplasm. It carries out the reaction (S)-2,3,4,5-tetrahydrodipicolinate + succinyl-CoA + H2O = (S)-2-succinylamino-6-oxoheptanedioate + CoA. It participates in amino-acid biosynthesis; L-lysine biosynthesis via DAP pathway; LL-2,6-diaminopimelate from (S)-tetrahydrodipicolinate (succinylase route): step 1/3. This is 2,3,4,5-tetrahydropyridine-2,6-dicarboxylate N-succinyltransferase from Salmonella typhi.